A 257-amino-acid chain; its full sequence is Hydroxyacylglutathione hydrolase (257 aa).

Zn(2+) is bound by residues H54, H56, D58, H59, H113, D137, and H175.

This sequence belongs to the metallo-beta-lactamase superfamily. Glyoxalase II family. In terms of assembly, monomer. Requires Zn(2+) as cofactor.

It carries out the reaction an S-(2-hydroxyacyl)glutathione + H2O = a 2-hydroxy carboxylate + glutathione + H(+). Its pathway is secondary metabolite metabolism; methylglyoxal degradation; (R)-lactate from methylglyoxal: step 2/2. Functionally, thiolesterase that catalyzes the hydrolysis of S-D-lactoyl-glutathione to form glutathione and D-lactic acid. The protein is Hydroxyacylglutathione hydrolase of Trichormus variabilis (strain ATCC 29413 / PCC 7937) (Anabaena variabilis).